We begin with the raw amino-acid sequence, 222 residues long: Phosphoribosylformylglycinamidine synthase subunit PurQ (222 aa).

Positions 3–222 constitute a Glutamine amidotransferase type-1 domain; the sequence is AAVVVFPGSN…RALAGALTPA (220 aa). Cys-86 acts as the Nucleophile in catalysis. Catalysis depends on residues His-194 and Glu-196.

Part of the FGAM synthase complex composed of 1 PurL, 1 PurQ and 2 PurS subunits.

The protein localises to the cytoplasm. It catalyses the reaction N(2)-formyl-N(1)-(5-phospho-beta-D-ribosyl)glycinamide + L-glutamine + ATP + H2O = 2-formamido-N(1)-(5-O-phospho-beta-D-ribosyl)acetamidine + L-glutamate + ADP + phosphate + H(+). The catalysed reaction is L-glutamine + H2O = L-glutamate + NH4(+). It functions in the pathway purine metabolism; IMP biosynthesis via de novo pathway; 5-amino-1-(5-phospho-D-ribosyl)imidazole from N(2)-formyl-N(1)-(5-phospho-D-ribosyl)glycinamide: step 1/2. Its function is as follows. Part of the phosphoribosylformylglycinamidine synthase complex involved in the purines biosynthetic pathway. Catalyzes the ATP-dependent conversion of formylglycinamide ribonucleotide (FGAR) and glutamine to yield formylglycinamidine ribonucleotide (FGAM) and glutamate. The FGAM synthase complex is composed of three subunits. PurQ produces an ammonia molecule by converting glutamine to glutamate. PurL transfers the ammonia molecule to FGAR to form FGAM in an ATP-dependent manner. PurS interacts with PurQ and PurL and is thought to assist in the transfer of the ammonia molecule from PurQ to PurL. This chain is Phosphoribosylformylglycinamidine synthase subunit PurQ, found in Ruegeria pomeroyi (strain ATCC 700808 / DSM 15171 / DSS-3) (Silicibacter pomeroyi).